Reading from the N-terminus, the 159-residue chain is Cyclic pyranopterin monophosphate synthase (159 aa).

Substrate-binding positions include L75 to H77 and M113 to E114. D128 is a catalytic residue.

It belongs to the MoaC family. As to quaternary structure, homohexamer; trimer of dimers.

It carries out the reaction (8S)-3',8-cyclo-7,8-dihydroguanosine 5'-triphosphate = cyclic pyranopterin phosphate + diphosphate. Its pathway is cofactor biosynthesis; molybdopterin biosynthesis. Functionally, catalyzes the conversion of (8S)-3',8-cyclo-7,8-dihydroguanosine 5'-triphosphate to cyclic pyranopterin monophosphate (cPMP). The chain is Cyclic pyranopterin monophosphate synthase from Aliivibrio fischeri (strain MJ11) (Vibrio fischeri).